Reading from the N-terminus, the 176-residue chain is Probable superoxide oxidase CybB (176 aa).

The next 4 helical transmembrane spans lie at 7-27 (CLQI…WSSI), 44-64 (IHFS…LIQL), 85-105 (VGHW…IAIL), and 137-157 (HLLL…AALL). Residues His13 and His45 each contribute to the heme b site. Positions 137 and 151 each coordinate heme b.

Belongs to the cytochrome b561 family. Heme b is required as a cofactor.

The protein localises to the cell inner membrane. It carries out the reaction a ubiquinol + 2 O2 = 2 superoxide + a ubiquinone + 2 H(+). In terms of biological role, B-type di-heme cytochrome. Catalyzes the oxidation of superoxide to molecular oxygen and transfers the extracted electrons to ubiquinone through the two hemes. The polypeptide is Probable superoxide oxidase CybB (cybB) (Yersinia pestis).